Consider the following 453-residue polypeptide: Trigger factor (453 aa).

The PPIase FKBP-type domain maps to 171 to 256 (GDRVTINFKG…ATSIEAPQDI (86 aa)).

This sequence belongs to the FKBP-type PPIase family. Tig subfamily.

The protein localises to the cytoplasm. The catalysed reaction is [protein]-peptidylproline (omega=180) = [protein]-peptidylproline (omega=0). Its function is as follows. Involved in protein export. Acts as a chaperone by maintaining the newly synthesized protein in an open conformation. Functions as a peptidyl-prolyl cis-trans isomerase. The polypeptide is Trigger factor (Bradyrhizobium diazoefficiens (strain JCM 10833 / BCRC 13528 / IAM 13628 / NBRC 14792 / USDA 110)).